Reading from the N-terminus, the 234-residue chain is BTB/POZ domain-containing protein KCTD5 (234 aa).

Alanine 2 is modified (N-acetylalanine). Positions 44–146 (KWVRLNVGGT…LVKDKIRERD (103 aa)) constitute a BTB domain. The tract at residues 213–234 (PYGTTSEPSEKAKILQERGSRM) is disordered. Residues 220–234 (PSEKAKILQERGSRM) show a composition bias toward basic and acidic residues.

Homopentamer. Interacts (via C-terminus) with GRASP55/GORASP2. Interacts with CUL3 and with ubiquitinated proteins. Interacts with CRY1.

The protein resides in the cytoplasm. It is found in the cytosol. Its subcellular location is the nucleus. Its function is as follows. Its interaction with CUL3 suggests that it may act as a substrate adapter in some E3 ligase complex. Does not affect the function of Kv channel Kv2.1/KCNB1, Kv1.2/KCNA2, Kv4.2/KCND2 and Kv3.4/KCNC4. The polypeptide is BTB/POZ domain-containing protein KCTD5 (Kctd5) (Mus musculus (Mouse)).